The primary structure comprises 571 residues: Decapping 5-like protein (571 aa).

Residues 1–17 show a composition bias toward low complexity; that stretch reads MASESSQSSSPSSSQPP. 4 disordered regions span residues 1 to 27, 102 to 141, 159 to 187, and 258 to 305; these read MASE…SPGN, LQVN…ISGY, LSSK…GSLT, and SQVV…SEAQ. Residues 25 to 108 form the Sm domain; that stretch reads PGNNVGDTFI…IKDLQVNPSP (84 aa). 2 stretches are compositionally biased toward polar residues: residues 104–138 and 167–187; these read VNPS…SSPI and TQHS…GSLT. Residues 264–279 are compositionally biased toward low complexity; the sequence is SPDVSSNQSYSSNPSP. Polar residues predominate over residues 293–305; sequence SVSSNLSPPSEAQ. The 37-residue stretch at 419–455 folds into the DFDF domain; sequence RIPSSSIEYTEEFDFEAMNEKFKKSELWGYLGRNNQR. The FFD box signature appears at 474-489; sequence PAYNKDDFFDTISCNQ. Residues 498–518 carry the TFG box motif; that stretch reads QQHNQFPEHMRQVPEAFGNNF.

This sequence belongs to the LSM14 family. As to quaternary structure, homodimer. Component of the decapping complex.

It is found in the cytoplasm. The protein localises to the P-body. Its function is as follows. As a component of the decapping complex, involved in the degradation of mRNAs. Promotes P-body formation. Translational repressor. The polypeptide is Decapping 5-like protein (DCP5-L) (Arabidopsis thaliana (Mouse-ear cress)).